The chain runs to 620 residues: Sodium-dependent dopamine transporter (620 aa).

Residues 1-56 (MSKSKCSVGLMSSVVAPAKEPNAMGPKEVELILVKEQNGVQLTSSTLTNPRQSPVE) lie on the Cytoplasmic side of the membrane. Residues 57–95 (AQDRETWGKKIDFLLSVIGFAVDLANVWRFPYLCYKNGG) traverse the membrane as a discontinuously helical segment. Residues glycine 75, alanine 77, valine 78, aspartate 79, and asparagine 82 each coordinate Na(+). Aspartate 79 is a binding site for dopamine. Transmembrane regions (helical) follow at residues 96–127 (GAFLVPYLLFMVIAGMPLFYMELALGQFNREG) and 128–171 (AAGV…FSSF). Dopamine-binding residues include serine 149 and glycine 153. The Extracellular segment spans residues 172–236 (TTELPWIHCN…SHGIDDLGPP (65 aa)). Cysteines 180 and 189 form a disulfide. N-linked (GlcNAc...) asparagine glycosylation is found at asparagine 181, asparagine 188, and asparagine 205. A run of 2 helical transmembrane segments spans residues 237–256 (RWQLTACLVLVIVLLYFSLW) and 257–287 (KGVKTSGKVVWITATMPYVVLTALLLRGVTL). The Extracellular portion of the chain corresponds to 288 to 306 (PGAIDGIRAYLSVDFYRLC). The discontinuously helical transmembrane segment at 307 to 335 (EASVWIDAATQVCFSLGVGFGVLIAFSSY) threads the bilayer. Glutamine 317 contributes to the chloride binding site. Residue phenylalanine 320 participates in dopamine binding. Positions 321 and 353 each coordinate Na(+). Chloride is bound at residue serine 321. Residues 336-376 (NKFTNNCYRDAIVTTSINSLTSFSSGFVVFSFLGYMAQKHS) form a helical membrane-spanning segment. Serine 357 lines the chloride pocket. At 377 to 400 (VPIGDVAKDGPGLIFIIYPEAIAT) the chain is on the extracellular side. Transmembrane regions (helical) follow at residues 401–442 (LPLS…QLLH), 443–466 (RHRELFTLFIVLATFLLSLFCVTN), and 467–499 (GGIYVFTLLDHFAAGTSILFGVLIEAIGVAWFY). Residues leucine 418, aspartate 421, and serine 422 each contribute to the Na(+) site. Residues serine 422 and alanine 423 each coordinate dopamine. The Cytoplasmic segment spans residues 500 to 516 (GVGQFSDDIQQMTGQRP). The helical transmembrane segment at 517–542 (SLYWRLCWKLVSPCFLLFVVVVSIVT) threads the bilayer. The Extracellular segment spans residues 543–553 (FRPPHYGAYIF). Residues 554–583 (PDWANALGWVIATSSMAMVPIYAAYKFCSL) traverse the membrane as a helical segment. An interaction with TGFB1I1 region spans residues 561-590 (GWVIATSSMAMVPIYAAYKFCSLPGSFREK). At 584–620 (PGSFREKLAYAIAPEKDRELVDRGEVRQFTLRHWLKV) the chain is on the cytoplasmic side.

It belongs to the sodium:neurotransmitter symporter (SNF) (TC 2.A.22) family. SLC6A3 subfamily. As to quaternary structure, monomer. Homooligomer; disulfide-linked. Interacts with PRKCABP and TGFB1I1. Interacts (via N-terminus) with SYNGR3 (via N-terminus). Interacts with SLC18A2. Interacts with TOR1A (ATP-bound); TOR1A regulates SLC6A3 subcellular location. Interacts with alpha-synuclein/SNCA. Interacts with SEPTIN4.

It is found in the cell membrane. The protein resides in the cell projection. Its subcellular location is the neuron projection. It localises to the axon. The enzyme catalyses dopamine(out) + chloride(out) + Na(+)(out) = dopamine(in) + chloride(in) + Na(+)(in). It catalyses the reaction (R)-noradrenaline(out) + chloride(out) + Na(+)(out) = (R)-noradrenaline(in) + chloride(in) + Na(+)(in). The catalysed reaction is dopamine(out) + chloride(out) + 2 Na(+)(out) = dopamine(in) + chloride(in) + 2 Na(+)(in). With respect to regulation, inhibited by zinc ions. In terms of biological role, mediates sodium- and chloride-dependent transport of dopamine. Also mediates sodium- and chloride-dependent transport of norepinephrine (also known as noradrenaline). Regulator of light-dependent retinal hyaloid vessel regression, downstream of OPN5 signaling. The protein is Sodium-dependent dopamine transporter (SLC6A3) of Macaca fascicularis (Crab-eating macaque).